A 291-amino-acid polypeptide reads, in one-letter code: Protein/nucleic acid deglycase HchA (291 aa).

The segment covering 1 to 18 (MSNERDTSRTPTPDHAEH) has biased composition (basic and acidic residues). The tract at residues 1-20 (MSNERDTSRTPTPDHAEHNA) is disordered. The active-site Nucleophile is the cysteine 188.

This sequence belongs to the peptidase C56 family. HchA subfamily.

It localises to the cytoplasm. The catalysed reaction is N(omega)-(1-hydroxy-2-oxopropyl)-L-arginyl-[protein] + H2O = lactate + L-arginyl-[protein] + H(+). It catalyses the reaction N(6)-(1-hydroxy-2-oxopropyl)-L-lysyl-[protein] + H2O = lactate + L-lysyl-[protein] + H(+). It carries out the reaction S-(1-hydroxy-2-oxopropyl)-L-cysteinyl-[protein] + H2O = lactate + L-cysteinyl-[protein] + H(+). The enzyme catalyses N(omega)-(1-hydroxy-2-oxoethyl)-L-arginyl-[protein] + H2O = L-arginyl-[protein] + glycolate + H(+). The catalysed reaction is N(6)-(1-hydroxy-2-oxoethyl)-L-lysyl-[protein] + H2O = glycolate + L-lysyl-[protein] + H(+). It catalyses the reaction S-(1-hydroxy-2-oxoethyl)-L-cysteinyl-[protein] + H2O = glycolate + L-cysteinyl-[protein] + H(+). It carries out the reaction N(2)-(1-hydroxy-2-oxopropyl)-dGTP + H2O = lactate + dGTP + H(+). The enzyme catalyses N(2)-(1-hydroxy-2-oxopropyl)-GTP + H2O = lactate + GTP + H(+). The catalysed reaction is N(2)-(1-hydroxy-2-oxopropyl)-GDP + H2O = lactate + GDP + H(+). It catalyses the reaction N(2)-(1-hydroxy-2-oxopropyl)-GMP + H2O = lactate + GMP + H(+). It carries out the reaction N(2)-(1-hydroxy-2-oxoethyl)-dGTP + H2O = dGTP + glycolate + H(+). The enzyme catalyses N(2)-(1-hydroxy-2-oxoethyl)-GTP + H2O = glycolate + GTP + H(+). The catalysed reaction is N(2)-(1-hydroxy-2-oxoethyl)-GDP + H2O = glycolate + GDP + H(+). It catalyses the reaction N(2)-(1-hydroxy-2-oxoethyl)-GMP + H2O = glycolate + GMP + H(+). It carries out the reaction an N(2)-(1-hydroxy-2-oxopropyl)-guanosine in RNA + H2O = a guanosine in RNA + lactate + H(+). The enzyme catalyses an N(2)-(1-hydroxy-2-oxopropyl)-2'-deoxyguanosine in DNA + H2O = a 2'-deoxyguanosine in DNA + lactate + H(+). The catalysed reaction is an N(2)-(1-hydroxy-2-oxoethyl)-guanosine in RNA + H2O = a guanosine in RNA + glycolate + H(+). It catalyses the reaction an N(2)-(1-hydroxy-2-oxoethyl)-2'-deoxyguanosine in DNA + H2O = a 2'-deoxyguanosine in DNA + glycolate + H(+). Functionally, protein and nucleotide deglycase that catalyzes the deglycation of the Maillard adducts formed between amino groups of proteins or nucleotides and reactive carbonyl groups of glyoxals. Thus, functions as a protein deglycase that repairs methylglyoxal- and glyoxal-glycated proteins, and releases repaired proteins and lactate or glycolate, respectively. Deglycates cysteine, arginine and lysine residues in proteins, and thus reactivates these proteins by reversing glycation by glyoxals. Acts on early glycation intermediates (hemithioacetals and aminocarbinols), preventing the formation of Schiff bases and advanced glycation endproducts (AGE). Also functions as a nucleotide deglycase able to repair glycated guanine in the free nucleotide pool (GTP, GDP, GMP, dGTP) and in DNA and RNA. Is thus involved in a major nucleotide repair system named guanine glycation repair (GG repair), dedicated to reversing methylglyoxal and glyoxal damage via nucleotide sanitization and direct nucleic acid repair. Plays an important role in protecting cells from carbonyl stress. The polypeptide is Protein/nucleic acid deglycase HchA (Pseudomonas aeruginosa (strain LESB58)).